A 339-amino-acid polypeptide reads, in one-letter code: Phenylalanine--tRNA ligase alpha subunit (339 aa).

Residue Glu254 coordinates Mg(2+).

It belongs to the class-II aminoacyl-tRNA synthetase family. Phe-tRNA synthetase alpha subunit type 1 subfamily. Tetramer of two alpha and two beta subunits. Requires Mg(2+) as cofactor.

The protein localises to the cytoplasm. It catalyses the reaction tRNA(Phe) + L-phenylalanine + ATP = L-phenylalanyl-tRNA(Phe) + AMP + diphosphate + H(+). This Acetivibrio thermocellus (strain ATCC 27405 / DSM 1237 / JCM 9322 / NBRC 103400 / NCIMB 10682 / NRRL B-4536 / VPI 7372) (Clostridium thermocellum) protein is Phenylalanine--tRNA ligase alpha subunit.